The chain runs to 100 residues: MRVVAVREKKGNALFSVRVQPRASKTAVSGPYAGGLKITLKAAPVDDAANRECCRLFAGMFGIADGRVHVVSGRSSRSKSVMLEGVSSREAEEAFERFGL.

It belongs to the UPF0235 family.

The polypeptide is UPF0235 protein Cvib_0403 (Chlorobium phaeovibrioides (strain DSM 265 / 1930) (Prosthecochloris vibrioformis (strain DSM 265))).